We begin with the raw amino-acid sequence, 139 residues long: 6,7-dimethyl-8-ribityllumazine synthase (139 aa).

Residues F11, 42–44, and 66–68 contribute to the 5-amino-6-(D-ribitylamino)uracil site; these read ALE and VVI. 71–72 lines the (2S)-2-hydroxy-3-oxobutyl phosphate pocket; that stretch reads ET. The active-site Proton donor is the H74. Residue N98 participates in 5-amino-6-(D-ribitylamino)uracil binding. (2S)-2-hydroxy-3-oxobutyl phosphate is bound at residue R112.

It belongs to the DMRL synthase family.

The enzyme catalyses (2S)-2-hydroxy-3-oxobutyl phosphate + 5-amino-6-(D-ribitylamino)uracil = 6,7-dimethyl-8-(1-D-ribityl)lumazine + phosphate + 2 H2O + H(+). It participates in cofactor biosynthesis; riboflavin biosynthesis; riboflavin from 2-hydroxy-3-oxobutyl phosphate and 5-amino-6-(D-ribitylamino)uracil: step 1/2. Functionally, catalyzes the formation of 6,7-dimethyl-8-ribityllumazine by condensation of 5-amino-6-(D-ribitylamino)uracil with 3,4-dihydroxy-2-butanone 4-phosphate. This is the penultimate step in the biosynthesis of riboflavin. This chain is 6,7-dimethyl-8-ribityllumazine synthase, found in Novosphingobium aromaticivorans (strain ATCC 700278 / DSM 12444 / CCUG 56034 / CIP 105152 / NBRC 16084 / F199).